The primary structure comprises 269 residues: Imidazoleglycerol-phosphate dehydratase 2, chloroplastic (269 aa).

The N-terminal 51 residues, 1–51, are a transit peptide targeting the chloroplast; sequence MTTAPFLFPSLSRLHSARASSFPKPPVGSGAGVAFPARPYGSSLRLRSSVM. Substrate-binding positions include glutamate 83, 109–117, 135–139, arginine 161, and arginine 183; these read HMLDQLASH and HHSNE. Mn(2+) is bound by residues histidine 109, histidine 135, histidine 136, and glutamate 139. Mn(2+)-binding residues include histidine 207, histidine 231, histidine 232, and glutamate 235. Residues 231-239 and 261-263 contribute to the substrate site; these read HHIIEATFK and SSK.

Belongs to the imidazoleglycerol-phosphate dehydratase family. Mn(2+) is required as a cofactor.

It localises to the plastid. The protein resides in the chloroplast. It carries out the reaction D-erythro-1-(imidazol-4-yl)glycerol 3-phosphate = 3-(imidazol-4-yl)-2-oxopropyl phosphate + H2O. The protein operates within amino-acid biosynthesis; L-histidine biosynthesis; L-histidine from 5-phospho-alpha-D-ribose 1-diphosphate: step 6/9. The protein is Imidazoleglycerol-phosphate dehydratase 2, chloroplastic of Triticum aestivum (Wheat).